Reading from the N-terminus, the 488-residue chain is Transmembrane protein 39A (488 aa).

N-linked (GlcNAc...) asparagine glycans are attached at residues Asn31 and Asn39. 8 consecutive transmembrane segments (helical) span residues 72–92 (SLLFEFLFFIYLLVALFIQYI), 110–130 (TSLNFHLIDYHLAAFITVMLA), 154–174 (VLISARLVLLTLCGWVLCWTL), 182–202 (SVLNLLFLGYPFGVYVPLCCF), 287–307 (EVLFNSLFSAYYVAFLPLCFV), 319–339 (CEHLIMVWINAFVMLTTQLLP), 420–440 (LLNLLILIEGSVVFYQLYSLL), and 446–466 (NHTLSMALILFCNYYVLFKLL).

It belongs to the TMEM39 family. As to quaternary structure, interacts with SACM1L, SEC23A and SEC24A.

It is found in the endoplasmic reticulum membrane. In terms of biological role, regulates autophagy by controlling the spatial distribution and levels of the intracellular phosphatidylinositol 4-phosphate (PtdIns(4)P) pools. Modulates (PtdIns(4)P) levels by regulating the ER-to-Golgi trafficking of the phosphatidylinositide phosphatase SACM1L. The polypeptide is Transmembrane protein 39A (TMEM39A) (Bos taurus (Bovine)).